The chain runs to 181 residues: Nucleoside-triphosphatase THEP1 (181 aa).

Residues 12 to 19 (GPVGSIKS) and 104 to 111 (VIVIDEIG) each bind ATP.

This sequence belongs to the THEP1 NTPase family.

The enzyme catalyses a ribonucleoside 5'-triphosphate + H2O = a ribonucleoside 5'-diphosphate + phosphate + H(+). In terms of biological role, has nucleotide phosphatase activity towards ATP, GTP, CTP, TTP and UTP. May hydrolyze nucleoside diphosphates with lower efficiency. This Thermoplasma acidophilum (strain ATCC 25905 / DSM 1728 / JCM 9062 / NBRC 15155 / AMRC-C165) protein is Nucleoside-triphosphatase THEP1.